We begin with the raw amino-acid sequence, 308 residues long: Uricase (308 aa).

Residues K5 and T65 each act as charge relay system in the active site. Urate contacts are provided by T65, D66, F177, R194, I242, Q243, and N269. Positions 283–308 are disordered; sequence ASVLREPPAPTGFQQFSMDRGDLDEQ.

The protein belongs to the uricase family.

The catalysed reaction is urate + O2 + H2O = 5-hydroxyisourate + H2O2. It functions in the pathway purine metabolism; urate degradation; (S)-allantoin from urate: step 1/3. Functionally, catalyzes the oxidation of uric acid to 5-hydroxyisourate, which is further processed to form (S)-allantoin. The chain is Uricase from Haloferax volcanii (strain ATCC 29605 / DSM 3757 / JCM 8879 / NBRC 14742 / NCIMB 2012 / VKM B-1768 / DS2) (Halobacterium volcanii).